Consider the following 791-residue polypeptide: MNAHSKEMAPLMGKRTTAPGGNPVVLTEKRPADLTPTKKSAHFFLEIEGFEPNPTVTKTSPPIFSKPMDSNIRQCLSGNCDDMDSPQSPQDDVTETPSNPNSPSANLAKEEQRQKKKRLKKRIFAAVSEGCVEELRELLQDLQDLCRRRRGLDVPDFLMHKLTASDTGKTCLMKALLNINPNTKEIVRILLAFAEENDILDRFINAEYTEEAYEGQTALNIAIERRQGDITAVLIAAGADVNAHAKGVFFNPKYQHEGFYFGETPLALAACTNQPEIVQLLMENEQTDITSQDSRGNNILHALVTVAEDFKTQNDFVKRMYDMILLRSGNWELETMRNNDGLTPLQLAAKMGKAEILKYILSREIKEKPLRSLSRKFTDWAYGPVSSSLYDLTNVDTTTDNSVLEIIVYNTNIDNRHEMLTLEPLHTLLHTKWKKFAKYMFFLSFCFYFFYNITLTLVSYYRPREDEDLPHPLALTHKMSWLQLLGRMFVLIWATCISVKEGIAIFLLRPSDLQSILSDAWFHFVFFVQAVLVILSVFLYLFAYKEYLACLVLAMALGWANMLYYTRGFQSMGMYSVMIQKVILHDVLKFLFVYILFLLGFGVALASLIEKCSKDKKDCSSYGSFSDAVLELFKLTIGLGDLNIQQNSTYPILFLFLLITYVILTFVLLLNMLIALMGETVENVSKESERIWRLQRARTILEFEKMLPEWLRSRFRMGELCKVADEDFRLCLRINEVKWTEWKTHVSFLNEDPGPIRRTADLNKIQDSSRSNSKTTLYAFDELDEFPETSV.

Disordered regions lie at residues 1-37 (MNAH…LTPT), 52-71 (PNPT…MDSN), and 76-113 (LSGN…EEQR). The Cytoplasmic portion of the chain corresponds to 1–430 (MNAHSKEMAP…TLEPLHTLLH (430 aa)). The segment covering 95–105 (ETPSNPNSPSA) has biased composition (polar residues). ANK repeat units lie at residues 117–148 (KRLK…LCRR), 170–198 (TCLM…EEND), 214–243 (EGQT…DVNA), 261–291 (FGET…DITS), 298–330 (NILH…RSGN), 340–362 (DGLT…YILS), and 398–420 (TTDN…HEML). Residues 431-460 (TKWKKFAKYMFFLSFCFYFFYNITLTLVSY) form a helical membrane-spanning segment. Over 461–479 (YRPREDEDLPHPLALTHKM) the chain is Extracellular. A helical transmembrane segment spans residues 480 to 508 (SWLQLLGRMFVLIWATCISVKEGIAIFLL). Over 509-519 (RPSDLQSILSD) the chain is Cytoplasmic. Residues 520-540 (AWFHFVFFVQAVLVILSVFLY) form a helical membrane-spanning segment. Topologically, residues 541–545 (LFAYK) are extracellular. The chain crosses the membrane as a helical span at residues 546 to 566 (EYLACLVLAMALGWANMLYYT). At 567-569 (RGF) the chain is on the cytoplasmic side. A helical transmembrane segment spans residues 570–608 (QSMGMYSVMIQKVILHDVLKFLFVYILFLLGFGVALASL). The Extracellular segment spans residues 609-620 (IEKCSKDKKDCS). The pore-forming intramembrane region spans 621-646 (SYGSFSDAVLELFKLTIGLGDLNIQQ). Residue Gly-638 coordinates Na(+). Topologically, residues 647–649 (NST) are extracellular. Residues 650 to 686 (YPILFLFLLITYVILTFVLLLNMLIALMGETVENVSK) form a helical membrane-spanning segment. The Cytoplasmic portion of the chain corresponds to 687 to 791 (ESERIWRLQR…ELDEFPETSV (105 aa)).

It belongs to the transient receptor (TC 1.A.4) family. TrpV subfamily. TRPV3 sub-subfamily. Homotetramer. May convert from a homotetramer to a homopentamer to allow pore dilation. Interacts with TRPV1; may form a heteromeric channel with TRPV1. Interacts with SNX11; this interaction promotes TRPV3 trafficking from the cell membrane to lysosome for degradation. In terms of tissue distribution, expressed in keratinocytes and hair follicles.

Its subcellular location is the cell membrane. The protein resides in the cytoplasm. It localises to the lysosome. It carries out the reaction Ca(2+)(in) = Ca(2+)(out). It catalyses the reaction Mg(2+)(in) = Mg(2+)(out). The catalysed reaction is Na(+)(in) = Na(+)(out). The enzyme catalyses K(+)(in) = K(+)(out). Activated by cannabinoid that binds to the vanilloid binding pocket. Diphenylboronic anhydride induces pore dilation and enhances cation permeability by promoting the conversion to a homopentamer. Functionally, non-selective calcium permeant cation channel. It is activated by innocuous (warm) temperatures and shows an increased response at noxious temperatures greater than 39 degrees Celsius. Activation exhibits an outward rectification. The channel pore can dilate to provide permeability to larger cations. May associate with TRPV1 and may modulate its activity. Is a negative regulator of hair growth and cycling: TRPV3-coupled signaling suppresses keratinocyte proliferation in hair follicles and induces apoptosis and premature hair follicle regression (catagen). The polypeptide is Transient receptor potential cation channel subfamily V member 3 (Trpv3) (Mus musculus (Mouse)).